The primary structure comprises 330 residues: Methionyl-tRNA formyltransferase (330 aa).

112 to 115 (SLLP) is a binding site for (6S)-5,6,7,8-tetrahydrofolate.

This sequence belongs to the Fmt family.

The enzyme catalyses L-methionyl-tRNA(fMet) + (6R)-10-formyltetrahydrofolate = N-formyl-L-methionyl-tRNA(fMet) + (6S)-5,6,7,8-tetrahydrofolate + H(+). Its function is as follows. Attaches a formyl group to the free amino group of methionyl-tRNA(fMet). The formyl group appears to play a dual role in the initiator identity of N-formylmethionyl-tRNA by promoting its recognition by IF2 and preventing the misappropriation of this tRNA by the elongation apparatus. The sequence is that of Methionyl-tRNA formyltransferase from Synechocystis sp. (strain ATCC 27184 / PCC 6803 / Kazusa).